The sequence spans 112 residues: Large ribosomal subunit protein eL36y (112 aa).

The span at Lys-79–Arg-88 shows a compositional bias: basic residues. The tract at residues Lys-79–Lys-112 is disordered. The span at Ser-102 to Lys-112 shows a compositional bias: gly residues.

It belongs to the eukaryotic ribosomal protein eL36 family.

This is Large ribosomal subunit protein eL36y (RPL36B) from Arabidopsis thaliana (Mouse-ear cress).